The sequence spans 182 residues: Peptidyl-tRNA hydrolase (182 aa).

Tyr14 is a tRNA binding site. Residue His19 is the Proton acceptor of the active site. Phe64, Asn66, and Asn112 together coordinate tRNA.

It belongs to the PTH family. In terms of assembly, monomer.

The protein resides in the cytoplasm. It carries out the reaction an N-acyl-L-alpha-aminoacyl-tRNA + H2O = an N-acyl-L-amino acid + a tRNA + H(+). Functionally, hydrolyzes ribosome-free peptidyl-tRNAs (with 1 or more amino acids incorporated), which drop off the ribosome during protein synthesis, or as a result of ribosome stalling. Its function is as follows. Catalyzes the release of premature peptidyl moieties from peptidyl-tRNA molecules trapped in stalled 50S ribosomal subunits, and thus maintains levels of free tRNAs and 50S ribosomes. In Wolbachia sp. subsp. Brugia malayi (strain TRS), this protein is Peptidyl-tRNA hydrolase.